The chain runs to 92 residues: Conotoxin Mr15.2 (92 aa).

The first 20 residues, M1 to F20, serve as a signal peptide directing secretion. Residues D21–R53 constitute a propeptide that is removed on maturation. The segment at G30–S49 is disordered.

Belongs to the conotoxin N superfamily. Contains 4 disulfide bonds. As to expression, expressed by the venom duct.

The protein localises to the secreted. The chain is Conotoxin Mr15.2 from Conus marmoreus (Marble cone).